We begin with the raw amino-acid sequence, 147 residues long: Myoglobin (147 aa).

Positions 2-141 (ADFDMVLKCW…IIADMEADYK (140 aa)) constitute a Globin domain. Residue His60 participates in nitrite binding. His60 contacts O2. His89 is a binding site for heme b.

It belongs to the globin family. As to quaternary structure, monomeric.

It is found in the cytoplasm. The protein localises to the sarcoplasm. It catalyses the reaction Fe(III)-heme b-[protein] + nitric oxide + H2O = Fe(II)-heme b-[protein] + nitrite + 2 H(+). The catalysed reaction is H2O2 + AH2 = A + 2 H2O. Functionally, monomeric heme protein which primary function is to store oxygen and facilitate its diffusion within muscle tissues. Reversibly binds oxygen through a pentacoordinated heme iron and enables its timely and efficient release as needed during periods of heightened demand. Depending on the oxidative conditions of tissues and cells, and in addition to its ability to bind oxygen, it also has a nitrite reductase activity whereby it regulates the production of bioactive nitric oxide. Under stress conditions, like hypoxia and anoxia, it also protects cells against reactive oxygen species thanks to its pseudoperoxidase activity. This Notothenia neglecta (Yellowbelly rockcod) protein is Myoglobin (mb).